The chain runs to 113 residues: Death-associated protein-like 1.S (113 aa).

Residues 1-53 (MTKELKVQSSPQALKAGHLPAVKAGGMRVSKKQGNDENSAPEKNAKKTLQEKP) form a disordered region.

It belongs to the DAP-DAPL1 family. Associates with ribosomes; preventing translation. Interacts with eiF5a (eif5a and eif5a2); preventing translation.

Its function is as follows. Ribosome-binding protein that promotes ribosome hibernation, a process during which ribosomes are stabilized in an inactive state and preserved from proteasomal degradation. Acts via its association with eiF5a (eif5a and eif5a2) at the polypeptide exit tunnel of the ribosome, preventing mRNA translation. Plays a key role in ribosome hibernation in the mature egg by preventing mRNA translation, leading to ribosome inactivation. Ribosomes, which are produced in large quantities during oogenesis, are stored and translationally repressed in the egg and early embryo. The protein is Death-associated protein-like 1.S (dapl1.S) of Xenopus laevis (African clawed frog).